A 2670-amino-acid chain; its full sequence is Inositol 1,4,5-trisphosphate-gated calcium channel ITPR3 (2670 aa).

The Cytoplasmic portion of the chain corresponds to 1-2233; that stretch reads MNEMSSFLHI…YVEGASTGVL (2233 aa). MIR domains are found at residues 113-173, 174-224, 232-288, 295-372, and 378-434; these read GDVV…LRSN, GDNV…INLF, EEVL…VEVV, GGAG…LDPT, and DSFV…IVSV. Residues Arg266, Leu269, and Arg270 each contribute to the 1D-myo-inositol 1,4,5-trisphosphate site. The 1D-myo-inositol 1,4,5-trisphosphate site is built by Arg503, Lys507, Arg510, Tyr567, Arg568, and Lys569. Residue Arg743 participates in Ca(2+) binding. 2 positions are modified to phosphoserine: Ser916 and Ser934. Residues Glu1122 and Glu1125 each contribute to the Ca(2+) site. The span at 1138–1153 shows a compositional bias: basic and acidic residues; sequence EVEAGATKDKKERPSD. Disordered stretches follow at residues 1138 to 1164 and 1807 to 1835; these read EVEA…HGEK and NMSD…SFSM. Phosphoserine is present on residues Ser1813, Ser1832, and Ser1834. Positions 1881 and 1945 each coordinate Ca(2+). Positions 1995, 2148, and 2151 each coordinate ATP. Residues 2234–2254 form a helical membrane-spanning segment; that stretch reads GSPLISLLFWILICFSIAALF. Residues 2255 to 2262 lie on the Extracellular side of the membrane; it reads TKRYSVRP. The helical transmembrane segment at 2263-2283 threads the bilayer; sequence LIVALILRSIYYLGIGPTLNI. Residues 2284 to 2292 are Cytoplasmic-facing; that stretch reads LGALNLTNK. Residues 2293 to 2310 form a helical membrane-spanning segment; it reads IVFVVSFVGNRGTFIRGY. The Extracellular portion of the chain corresponds to 2311-2324; it reads KAMVMDMEFLYHVG. The helical transmembrane segment at 2325–2345 threads the bilayer; sequence YILTSVLGLFAHELFYSILLF. At 2346 to 2367 the chain is on the cytoplasmic side; sequence DLIYREETLFNVIKSVTRNGRS. A helical membrane pass occupies residues 2368–2388; sequence ILLTALLALILVYLFSIVGFL. Residues 2389-2495 lie on the Extracellular side of the membrane; it reads FLKDDFILEV…ESLFPARVVY (107 aa). A disulfide bond links Cys2454 and Cys2460. A helical transmembrane segment spans residues 2496–2516; sequence DLLFFFIVIIIVLNLIFGVII. Topologically, residues 2517–2670 are cytoplasmic; it reads DTFADLRSEK…FVDVQNCMSR (154 aa). ATP contacts are provided by Cys2537 and Phe2538. Cys2537 contacts Zn(2+). The Zn(2+) site is built by Cys2540 and His2557. ATP contacts are provided by Lys2559, His2562, Asn2563, and Met2564. His2562 contributes to the Zn(2+) binding site. Ca(2+) is bound at residue Thr2580. 2 positions are modified to phosphoserine: Ser2608 and Ser2669.

It belongs to the InsP3 receptor family. As to quaternary structure, homodimer. Homotetramer. Interacts with TRPC1, TRPC3, TRPC4. Interacts with TRPV4. Interacts with SIGMAR1. Found in a complex with AKT1 and PML; this interaction modulates IP3R3-phosphorylation and in turn ITPR3-dependent calcium release. Interacts with IRAG2 (via coiled-coil domain). Interacts with CABP1. Interacts with TMBIM4/LFG4. Interacts with CEMIP. Interacts with TESPA1. Interacts with TMEM203. Interacts with BOK; regulates ITPR3 expression. Interacts with BCL2L10. Interacts with CHGA and CHGB. Post-translationally, phosphorylated by AKT1 on serine and/or threonine residues.

It is found in the endoplasmic reticulum membrane. It localises to the cytoplasmic vesicle. Its subcellular location is the secretory vesicle membrane. It carries out the reaction Ca(2+)(in) = Ca(2+)(out). With respect to regulation, inositol 1,4,5-trisphosphate-gated calcium channel is regulated by cytosolic calcium in a biphasic manner. At low concentrations, cytosolic calcium binds at a high-affinity juxtamembrane domain (JD) calcium binding site, allowing ITPR3 to activate by escaping a low-energy resting state through an ensemble of preactivated states. At high cytosolic calcium concentrations, ITPR3 preferentially enters an inhibited state stabilized by calcium binding at a second, low-affinity cytoplasmic domain (CD) calcium binding site. Inositol 1,4,5-trisphosphate-gated calcium channel that, upon 1D-myo-inositol 1,4,5-trisphosphate binding, transports calcium from the endoplasmic reticulum lumen to cytoplasm, thus releasing the intracellular calcium and therefore participates in cellular calcium ion homeostasis. 1D-myo-inositol 1,4,5-trisphosphate binds to the ligand-free channel without altering its global conformation, yielding the low-energy resting state, then progresses through resting-to preactivated transitions to the higher energy preactivated state, which increases affinity for calcium, promoting binding of the low basal cytosolic calcium at the juxtamembrane domain (JD) site, favoring the transition through the ensemble of high-energy intermediate states along the trajectory to the fully-open activated state. Upon opening, releases calcium in the cytosol where it can bind to the low-affinity cytoplasmic domain (CD) site and stabilizes the inhibited state to terminate calcium release. This chain is Inositol 1,4,5-trisphosphate-gated calcium channel ITPR3, found in Mus musculus (Mouse).